Consider the following 474-residue polypeptide: Glutathione synthetase (474 aa).

Ala2 carries the N-acetylalanine modification. Position 125 (Arg125) interacts with substrate. Glu144 contacts ATP. Residues Glu144 and Asn146 each contribute to the Mg(2+) site. Residues 148–151 (ISAS), 214–216 (ERN), Gln220, and 267–270 (RDGY) contribute to the substrate site. Residues Lys305, 364–373 (KPQREGGGNN), Tyr375, and 398–401 (MEKT) each bind ATP. Glu368 is a binding site for Mg(2+). Position 415 is a phosphoserine (Ser415). Residue Glu425 participates in ATP binding. Arg450 is a substrate binding site. Residues Lys452 and Asp458 each contribute to the ATP site. A substrate-binding site is contributed by 461 to 462 (VA).

It belongs to the eukaryotic GSH synthase family. In terms of assembly, homodimer. Mg(2+) is required as a cofactor.

It carries out the reaction gamma-L-glutamyl-L-cysteine + glycine + ATP = glutathione + ADP + phosphate + H(+). The protein operates within sulfur metabolism; glutathione biosynthesis; glutathione from L-cysteine and L-glutamate: step 2/2. Functionally, catalyzes the production of glutathione from gamma-glutamylcysteine and glycine in an ATP-dependent manner. Glutathione (gamma-glutamylcysteinylglycine, GSH) is the most abundant intracellular thiol in living aerobic cells and is required for numerous processes including the protection of cells against oxidative damage, amino acid transport, the detoxification of foreign compounds, the maintenance of protein sulfhydryl groups in a reduced state and acts as a cofactor for a number of enzymes. This is Glutathione synthetase (GSS) from Macaca fascicularis (Crab-eating macaque).